The chain runs to 347 residues: Geranylgeranyl pyrophosphate synthase 7, chloroplastic (347 aa).

The N-terminal 39 residues, 1-39, are a transit peptide targeting the chloroplast; the sequence is MTTLNLSIFPSVKISSSASIPGFIKIQPFLLRRKLSTVL. Residues lysine 95, arginine 98, and histidine 127 each contribute to the isopentenyl diphosphate site. Residues aspartate 134 and aspartate 140 each coordinate Mg(2+). Arginine 145 lines the dimethylallyl diphosphate pocket. Position 146 (arginine 146) interacts with isopentenyl diphosphate. Dimethylallyl diphosphate-binding residues include lysine 232, threonine 233, glutamine 270, lysine 287, and lysine 297.

It belongs to the FPP/GGPP synthase family. As to quaternary structure, monomer. Mg(2+) serves as cofactor.

Its subcellular location is the plastid. It is found in the chloroplast. The catalysed reaction is isopentenyl diphosphate + dimethylallyl diphosphate = (2E)-geranyl diphosphate + diphosphate. The enzyme catalyses isopentenyl diphosphate + (2E)-geranyl diphosphate = (2E,6E)-farnesyl diphosphate + diphosphate. It catalyses the reaction isopentenyl diphosphate + (2E,6E)-farnesyl diphosphate = (2E,6E,10E)-geranylgeranyl diphosphate + diphosphate. It functions in the pathway isoprenoid biosynthesis; farnesyl diphosphate biosynthesis; farnesyl diphosphate from geranyl diphosphate and isopentenyl diphosphate: step 1/1. It participates in isoprenoid biosynthesis; geranyl diphosphate biosynthesis; geranyl diphosphate from dimethylallyl diphosphate and isopentenyl diphosphate: step 1/1. The protein operates within isoprenoid biosynthesis; geranylgeranyl diphosphate biosynthesis; geranylgeranyl diphosphate from farnesyl diphosphate and isopentenyl diphosphate: step 1/1. Catalyzes the trans-addition of the three molecules of IPP onto DMAPP to form geranylgeranyl pyrophosphate. The protein is Geranylgeranyl pyrophosphate synthase 7, chloroplastic of Arabidopsis thaliana (Mouse-ear cress).